A 742-amino-acid chain; its full sequence is Vesicle-fusing ATPase (742 aa).

ATP-binding positions include 499–504 and 539–546; these read NGMVDC and SGSGKTAL. Threonine 544 contributes to the Mg(2+) binding site.

The protein belongs to the AAA ATPase family. In terms of assembly, homohexamer. Binds to SNARE-SNAP complexes to form 20S particles. Mg(2+) serves as cofactor.

The protein resides in the cytoplasm. It carries out the reaction ATP + H2O = ADP + phosphate + H(+). Required for vesicle-mediated transport. Catalyzes the fusion of transport vesicles within the Golgi cisternae. Is also required for transport from the endoplasmic reticulum to the Golgi stack. Seems to function as a fusion protein required for the delivery of cargo proteins to all compartments of the Golgi stack independent of vesicle origin. Required for maintaining the normal morphology of the Golgi apparatus. This chain is Vesicle-fusing ATPase, found in Arabidopsis thaliana (Mouse-ear cress).